A 314-amino-acid polypeptide reads, in one-letter code: Epithelial-stromal interaction protein 1 (314 aa).

Disordered stretches follow at residues 1–72, 227–272, and 289–314; these read MYTR…PNES, WAGS…RAQI, and QGKS…SWGL. Positions 18-30 are enriched in basic and acidic residues; the sequence is SRDHAGAGQRREL. The residue at position 39 (S39) is a Phosphoserine. Positions 71-180 form a coiled coil; that stretch reads ESRRQKIQRI…QEDIRRATFR (110 aa). The segment covering 232–272 has biased composition (basic and acidic residues); the sequence is AHRDSPQKEDNPRLQKTRDGHQKNKLLETKGQHQEEERAQI. Residues 305–314 are compositionally biased toward polar residues; the sequence is NMNSTDSWGL.

As to expression, expressed in the spleen, with expression in T cells, B cells, natural killer cells and natural killer T cells and high expression in monocytes and macrophages.

Its function is as follows. Plays a role in M1 macrophage polarization and is required for the proper regulation of gene expression during M1 versus M2 macrophage differentiation. Might play a role in RELA/p65 and STAT1 phosphorylation and nuclear localization upon activation of macrophages. This Mus musculus (Mouse) protein is Epithelial-stromal interaction protein 1 (Epsti1).